Consider the following 212-residue polypeptide: 2-dehydro-3-deoxy-phosphogluconate aldolase (212 aa).

The active-site Proton acceptor is Glu45. Pyruvate is bound by residues Arg49, Thr73, and Lys133. The active-site Schiff-base intermediate with substrate is the Lys133.

This sequence belongs to the KHG/KDPG aldolase family. In terms of assembly, homotrimer.

It localises to the cytoplasm. It catalyses the reaction 2-dehydro-3-deoxy-6-phospho-D-gluconate = D-glyceraldehyde 3-phosphate + pyruvate. It participates in carbohydrate acid metabolism; 2-dehydro-3-deoxy-D-gluconate degradation; D-glyceraldehyde 3-phosphate and pyruvate from 2-dehydro-3-deoxy-D-gluconate: step 2/2. Functionally, involved in the degradation of glucose via the Entner-Doudoroff pathway. Catalyzes the reversible, stereospecific retro-aldol cleavage of 2-keto-3-deoxy-6-phosphogluconate (KDPG) to pyruvate and D-glyceraldehyde-3-phosphate. The protein is 2-dehydro-3-deoxy-phosphogluconate aldolase (eda) of Haemophilus influenzae (strain ATCC 51907 / DSM 11121 / KW20 / Rd).